The primary structure comprises 449 residues: Tubulin alpha-2 chain (449 aa).

Q11, E71, S140, G144, T145, T179, N206, and N228 together coordinate GTP. E71 contributes to the Mg(2+) binding site. The active site involves E254.

This sequence belongs to the tubulin family. As to quaternary structure, dimer of alpha and beta chains. A typical microtubule is a hollow water-filled tube with an outer diameter of 25 nm and an inner diameter of 15 nM. Alpha-beta heterodimers associate head-to-tail to form protofilaments running lengthwise along the microtubule wall with the beta-tubulin subunit facing the microtubule plus end conferring a structural polarity. Microtubules usually have 13 protofilaments but different protofilament numbers can be found in some organisms and specialized cells. Mg(2+) is required as a cofactor.

It is found in the cytoplasm. The protein localises to the cytoskeleton. It catalyses the reaction GTP + H2O = GDP + phosphate + H(+). Its function is as follows. Tubulin is the major constituent of microtubules, a cylinder consisting of laterally associated linear protofilaments composed of alpha- and beta-tubulin heterodimers. Microtubules grow by the addition of GTP-tubulin dimers to the microtubule end, where a stabilizing cap forms. Below the cap, tubulin dimers are in GDP-bound state, owing to GTPase activity of alpha-tubulin. The sequence is that of Tubulin alpha-2 chain (tub1) from Schizosaccharomyces pombe (strain 972 / ATCC 24843) (Fission yeast).